A 184-amino-acid polypeptide reads, in one-letter code: Tumor necrosis factor alpha-induced protein 8-like protein 2 (184 aa).

The protein belongs to the TNFAIP8 family. TNFAIP8L2 subfamily. In terms of assembly, may interact with CASP8; however, such result is unclear since could not reproduce the interaction with CASP8. Interacts with RAC1. In terms of processing, ubiquitinated in a BTRC-depdent manner; leading to degradation mediated through the proteasome pathway.

The protein resides in the cytoplasm. It localises to the nucleus. Its subcellular location is the lysosome. Acts as a negative regulator of innate and adaptive immunity by maintaining immune homeostasis. Plays a regulatory role in the Toll-like signaling pathway by determining the strength of LPS-induced signaling and gene expression. Inhibits TCR-mediated T-cell activation and negatively regulate T-cell function to prevent hyperresponsiveness. Also inhibits autolysosome formation via negatively modulating MTOR activation by interacting with RAC1 and promoting the disassociation of the RAC1-MTOR complex. Plays an essential role in NK-cell biology by acting as a checkpoint and displaying an expression pattern correlating with NK-cell maturation process and by negatively regulating NK-cell maturation and antitumor immunity. Mechanistically, suppresses IL-15-triggered mTOR activity in NK-cells. This is Tumor necrosis factor alpha-induced protein 8-like protein 2 (TNFAIP8L2) from Rhinolophus ferrumequinum (Greater horseshoe bat).